Reading from the N-terminus, the 578-residue chain is Acyl-CoA ligase AKT1 (578 aa).

Residues 210–218 (SSGTSGAQK), 350–355 (QCYGAT), aspartate 438, arginine 457, and lysine 554 each bind ATP. The SBD1 stretch occupies residues 281 to 350 (DVEDLLSIVE…RHHPTWKTKQ (70 aa)). The segment at 351 to 413 (CYGATEAGTA…VSSPSLAIGY (63 aa)) is SBD2. The Peroxisomal targeting signal type 1 motif lies at 576 to 578 (SKI).

It localises to the peroxisome. The protein operates within mycotoxin biosynthesis. In terms of biological role, acyl-CoA ligase; part of the gene clusters that mediate the biosynthesis of the host-selective toxins (HSTs) AK-toxins responsible for Japanese pear black spot disease by the Japanese pear pathotype. AK-toxins are esters of 9,10-epoxy 8-hydroxy 9-methyldecatrienoic acid (EDA). On cellular level, AK-toxins affect plasma membrane of susceptible cells and cause a sudden increase in loss of K(+) after a few minutes of toxin treatment. The acyl-CoA ligase AKT1, the hydrolase AKT2 and enoyl-CoA hydratase AKT3 are all involved in the biosynthesis of the AK-, AF- and ACT-toxin common 9,10-epoxy-8-hydroxy-9-methyl-decatrienoic acid (EDA) structural moiety. Part of the EDA biosynthesis occurs in the peroxisome since these 3 enzymes are localized in peroxisomes. The exact roles of the 3 enzymes, as well as of additional AK-toxin clusters enzymes, including AKT4, AKT6 and AKTS1, have still to be elucidated. The Cytochrome P450 monooxygenase AKT7 on the other side functions to limit production of EDA and AK-toxin, probably via the catalysis of a side reaction of EDA or its precursor. This is Acyl-CoA ligase AKT1 from Alternaria alternata (Alternaria rot fungus).